The primary structure comprises 338 residues: Mitochondrial transcription factor 1 (338 aa).

S-adenosyl-L-methionine contacts are provided by L23, D76, D100, and N136.

The protein belongs to the class I-like SAM-binding methyltransferase superfamily. rRNA adenine N(6)-methyltransferase family.

It is found in the mitochondrion. Its function is as follows. Mitochondrial transcription factor that confers selective promoter recognition on the core subunit of the yeast mitochondrial RNA polymerase. Interacts with DNA in a non-specific manner. In Lachancea kluyveri (Yeast), this protein is Mitochondrial transcription factor 1 (MTF1).